A 456-amino-acid polypeptide reads, in one-letter code: Probable glycine dehydrogenase (decarboxylating) subunit 1 (456 aa).

Belongs to the GcvP family. N-terminal subunit subfamily. In terms of assembly, the glycine cleavage system is composed of four proteins: P, T, L and H. In this organism, the P 'protein' is a heterodimer of two subunits.

It carries out the reaction N(6)-[(R)-lipoyl]-L-lysyl-[glycine-cleavage complex H protein] + glycine + H(+) = N(6)-[(R)-S(8)-aminomethyldihydrolipoyl]-L-lysyl-[glycine-cleavage complex H protein] + CO2. The glycine cleavage system catalyzes the degradation of glycine. The P protein binds the alpha-amino group of glycine through its pyridoxal phosphate cofactor; CO(2) is released and the remaining methylamine moiety is then transferred to the lipoamide cofactor of the H protein. The polypeptide is Probable glycine dehydrogenase (decarboxylating) subunit 1 (Legionella pneumophila (strain Corby)).